A 513-amino-acid chain; its full sequence is Maturase K (513 aa).

It belongs to the intron maturase 2 family. MatK subfamily.

It is found in the plastid. The protein localises to the chloroplast. Usually encoded in the trnK tRNA gene intron. Probably assists in splicing its own and other chloroplast group II introns. In Astrebla lappacea (Curly Mitchell grass), this protein is Maturase K.